The primary structure comprises 986 residues: MVSKSDQLLIVVSILEGRHFPKRPKHMLVVEAKFDGEQLATDPVDHTDQPEFATELAWEIDRKALHQHRLQRTPIKLQCFALDPVTSAKETIGYIVLDLRTAQETKQAPKWYQLLSNKYTKFKSEIQISIALETDTKPPVDSFKAKGAPPRDGKVPAILAGLDPRDIVAVLNEEGGYHQIGPAEYCTDSFIMSVTIAFATQLEQLIPCTMKLPERQPEFFFYYSLLGNDVTNEPFNDLINPNFEPERASVRIRSSVEILRVYLALQSKLQIHLCCGDQSLGSTEIPLTGLLKKGSTEINQHPVTVEGAFTLDPPNRAKQKLAPIPVELAPTVGVSVALQREGIDSQSLIELKTQNEHEPEHSKKKVLTPIKEKTLTGPKSPTVSPVPSHNQSPPTKDDATESEVESLQYDKDTKPNPKASSSVPASLAQLVTTSNASEVASGQKIAVPATSHHFCFSIDLRSIHALEIGFPINCILRYSYPFFGSAAPIMTNPPVEVRKNMEVFLPQSYCAFDFATMPHQLQDTFLRIPLLVELWHKDKMSKDLLLGIARIQLSNILSSEKTRFLGSNGEQCWRQTYSESVPVIAAQGSNNRIADLSYTVTLEDYGLVKMREIFISDSSQGVSAVQQKPSSLPPAPCPSEIQTEPRETLEYKAALELEMWKEMQEDIFENQLKQKELAHMQALAEEWKKRDRERESLVKKKVAEYTILEGKLQKTLIDLEKREQQLASVESELQREKKELQSERQRNLQELQDSIRRAKEDCIHQVELERLKIKQLEEDKHRLQQQLNDAENKYKILEKEFQQFKDQQNNKPEIRLQSEINLLTLEKVELERKLESATKSKLHYKQQWGRALKELARLKQREQESQMARLKKQQEELEQMRLRYLAAEEKDTVKTERQELLDIRNELNRLRQQEQKQYQDSTEIASGKKDGPHGSVLEEGLDDYLTRLIEERDTLMRTGVYNHEDRIISELDRQIREILAKSNASN.

One can recognise a C2 1 domain in the interval 1–112 (MVSKSDQLLI…QETKQAPKWY (112 aa)). Residues 350-424 (ELKTQNEHEP…PNPKASSSVP (75 aa)) form a disordered region. Over residues 377–394 (GPKSPTVSPVPSHNQSPP) the composition is skewed to polar residues. Positions 433–566 (TSNASEVASG…LSSEKTRFLG (134 aa)) constitute a C2 2 domain. A coiled-coil region spans residues 669-925 (ENQLKQKELA…KQYQDSTEIA (257 aa)). A disordered region spans residues 914 to 937 (EQKQYQDSTEIASGKKDGPHGSVL). Residues 915 to 924 (QKQYQDSTEI) are compositionally biased toward polar residues. Serine 935 is subject to Phosphoserine.

It belongs to the CEP120 family. As to quaternary structure, interacts with TACC2, TACC3, CCDC52, TALPID3.

Its subcellular location is the cytoplasm. It localises to the cytoskeleton. The protein localises to the microtubule organizing center. The protein resides in the centrosome. Functionally, plays a role in the microtubule-dependent coupling of the nucleus and the centrosome. Involved in the processes that regulate centrosome-mediated interkinetic nuclear migration (INM) of neural progenitors and for proper positioning of neurons during brain development. Also implicated in the migration and selfrenewal of neural progenitors. Required for centriole duplication and maturation during mitosis and subsequent ciliogenesis. Required for the recruitment of CEP295 to the proximal end of new-born centrioles at the centriolar microtubule wall during early S phase in a PLK4-dependent manner. This chain is Centrosomal protein of 120 kDa (CEP120), found in Homo sapiens (Human).